Consider the following 336-residue polypeptide: MQDQEEERMITNQPKEEDLILENGLRPKFLVDYIGQNSVKERLKIFIEAAKQRQEPLDHVLLYGPPGLGKTTLANIIANEMNVNIKITSGPAIERPGDLAAILTNLAANDVLFIDEIHRLNRTVEEVLYPAMEDFALDIIIGKGPSARSIRLDLSQFTLIGATTRAGQLSSPLRDRFGVICKLELYNNKQLTAIVKRSARILDAYIDDEGATEIASRSRGTPRIANRLLRRVRDYAQVKSDGRITKRVAEEALILLEVDSLGLDNTDKKMIETMIYNFNGGPVGLDTLAATTGEERNTIEDVYEPYLLQMGFINRTPRGRIVMQKAYEHFNIPSAE.

The large ATPase domain (RuvB-L) stretch occupies residues 2-186 (QDQEEERMIT…FGVICKLELY (185 aa)). ATP contacts are provided by residues Leu25, Arg26, Gly67, Lys70, Thr71, Thr72, 133–135 (EDF), Arg176, Tyr186, and Arg223. A Mg(2+)-binding site is contributed by Thr71. The small ATPAse domain (RuvB-S) stretch occupies residues 187–257 (NNKQLTAIVK…VAEEALILLE (71 aa)). A head domain (RuvB-H) region spans residues 260-336 (SLGLDNTDKK…YEHFNIPSAE (77 aa)). Positions 296, 315, and 320 each coordinate DNA.

The protein belongs to the RuvB family. In terms of assembly, homohexamer. Forms an RuvA(8)-RuvB(12)-Holliday junction (HJ) complex. HJ DNA is sandwiched between 2 RuvA tetramers; dsDNA enters through RuvA and exits via RuvB. An RuvB hexamer assembles on each DNA strand where it exits the tetramer. Each RuvB hexamer is contacted by two RuvA subunits (via domain III) on 2 adjacent RuvB subunits; this complex drives branch migration. In the full resolvosome a probable DNA-RuvA(4)-RuvB(12)-RuvC(2) complex forms which resolves the HJ.

It localises to the cytoplasm. The enzyme catalyses ATP + H2O = ADP + phosphate + H(+). Functionally, the RuvA-RuvB-RuvC complex processes Holliday junction (HJ) DNA during genetic recombination and DNA repair, while the RuvA-RuvB complex plays an important role in the rescue of blocked DNA replication forks via replication fork reversal (RFR). RuvA specifically binds to HJ cruciform DNA, conferring on it an open structure. The RuvB hexamer acts as an ATP-dependent pump, pulling dsDNA into and through the RuvAB complex. RuvB forms 2 homohexamers on either side of HJ DNA bound by 1 or 2 RuvA tetramers; 4 subunits per hexamer contact DNA at a time. Coordinated motions by a converter formed by DNA-disengaged RuvB subunits stimulates ATP hydrolysis and nucleotide exchange. Immobilization of the converter enables RuvB to convert the ATP-contained energy into a lever motion, pulling 2 nucleotides of DNA out of the RuvA tetramer per ATP hydrolyzed, thus driving DNA branch migration. The RuvB motors rotate together with the DNA substrate, which together with the progressing nucleotide cycle form the mechanistic basis for DNA recombination by continuous HJ branch migration. Branch migration allows RuvC to scan DNA until it finds its consensus sequence, where it cleaves and resolves cruciform DNA. In Alkaliphilus metalliredigens (strain QYMF), this protein is Holliday junction branch migration complex subunit RuvB.